A 312-amino-acid polypeptide reads, in one-letter code: tRNA dimethylallyltransferase (312 aa).

Residue 15–22 coordinates ATP; it reads GPTAAGKS. A substrate-binding site is contributed by 17-22; that stretch reads TAAGKS. The interaction with substrate tRNA stretch occupies residues 40-43; that stretch reads DSMQ.

Belongs to the IPP transferase family. As to quaternary structure, monomer. It depends on Mg(2+) as a cofactor.

It catalyses the reaction adenosine(37) in tRNA + dimethylallyl diphosphate = N(6)-dimethylallyladenosine(37) in tRNA + diphosphate. Its function is as follows. Catalyzes the transfer of a dimethylallyl group onto the adenine at position 37 in tRNAs that read codons beginning with uridine, leading to the formation of N6-(dimethylallyl)adenosine (i(6)A). This chain is tRNA dimethylallyltransferase, found in Streptomyces griseus subsp. griseus (strain JCM 4626 / CBS 651.72 / NBRC 13350 / KCC S-0626 / ISP 5235).